The following is a 472-amino-acid chain: Argininosuccinate lyase (472 aa).

Belongs to the lyase 1 family. Argininosuccinate lyase subfamily.

The protein localises to the cytoplasm. The catalysed reaction is 2-(N(omega)-L-arginino)succinate = fumarate + L-arginine. It participates in amino-acid biosynthesis; L-arginine biosynthesis; L-arginine from L-ornithine and carbamoyl phosphate: step 3/3. This is Argininosuccinate lyase from Synechococcus sp. (strain CC9605).